A 267-amino-acid chain; its full sequence is 2-keto-3-deoxy-L-rhamnonate aldolase (267 aa).

Residue histidine 49 is the Proton acceptor of the active site. Glutamine 151 provides a ligand contact to substrate. Glutamate 153 contacts Mg(2+). Residues alanine 178 and aspartate 179 each contribute to the substrate site. Aspartate 179 serves as a coordination point for Mg(2+).

The protein belongs to the HpcH/HpaI aldolase family. KDR aldolase subfamily. As to quaternary structure, homohexamer. It depends on Mg(2+) as a cofactor.

The catalysed reaction is 2-dehydro-3-deoxy-L-rhamnonate = (S)-lactaldehyde + pyruvate. Functionally, catalyzes the reversible retro-aldol cleavage of 2-keto-3-deoxy-L-rhamnonate (KDR) to pyruvate and lactaldehyde. The chain is 2-keto-3-deoxy-L-rhamnonate aldolase from Escherichia coli (strain UTI89 / UPEC).